The following is a 368-amino-acid chain: DNA replication and repair protein RecF (368 aa).

An ATP-binding site is contributed by 30–37 (GNNAQGKT).

Belongs to the RecF family.

Its subcellular location is the cytoplasm. Its function is as follows. The RecF protein is involved in DNA metabolism; it is required for DNA replication and normal SOS inducibility. RecF binds preferentially to single-stranded, linear DNA. It also seems to bind ATP. This chain is DNA replication and repair protein RecF, found in Streptococcus pyogenes serotype M4 (strain MGAS10750).